The sequence spans 670 residues: Alpha-1,4-glucan:maltose-1-phosphate maltosyltransferase (670 aa).

Alpha-maltose 1-phosphate contacts are provided by Lys262, Gln322, and Asp357. Residue Asp393 is the Nucleophile of the active site. Asn394 is an alpha-maltose 1-phosphate binding site. Glu422 functions as the Proton donor in the catalytic mechanism. 534–535 (KY) contributes to the alpha-maltose 1-phosphate binding site.

This sequence belongs to the glycosyl hydrolase 13 family. GlgE subfamily. Homodimer.

The enzyme catalyses alpha-maltose 1-phosphate + [(1-&gt;4)-alpha-D-glucosyl](n) = [(1-&gt;4)-alpha-D-glucosyl](n+2) + phosphate. Its function is as follows. Maltosyltransferase that uses maltose 1-phosphate (M1P) as the sugar donor to elongate linear or branched alpha-(1-&gt;4)-glucans. Is involved in a branched alpha-glucan biosynthetic pathway from trehalose, together with TreS, Mak and GlgB. In Chlorobaculum tepidum (strain ATCC 49652 / DSM 12025 / NBRC 103806 / TLS) (Chlorobium tepidum), this protein is Alpha-1,4-glucan:maltose-1-phosphate maltosyltransferase.